A 299-amino-acid polypeptide reads, in one-letter code: HTH-type transcriptional regulator ArgP (299 aa).

The 57-residue stretch at 4–60 (PDYRALQALDAVIRERGFERAAQKLCITQSAVSQRIKQLENLFGQPLLVRTVPPQPT) folds into the HTH lysR-type domain. A DNA-binding region (H-T-H motif) is located at residues 21-40 (FERAAQKLCITQSAVSQRIK).

It belongs to the LysR transcriptional regulatory family. As to quaternary structure, homodimer.

In terms of biological role, controls the transcription of genes involved in arginine and lysine metabolism. The protein is HTH-type transcriptional regulator ArgP of Proteus mirabilis (strain HI4320).